We begin with the raw amino-acid sequence, 123 residues long: Cliotide T4 (123 aa).

The N-terminal stretch at 1-28 is a signal peptide; it reads MASLRIAPLALFFFLAASVMFTVEKTEA. Positions 29–58 form a cross-link, cyclopeptide (Gly-Asn); it reads GIPCGESCVFIPCITAAIGCSCKSKVCYRN. Intrachain disulfides connect cysteine 32-cysteine 48, cysteine 36-cysteine 50, and cysteine 41-cysteine 55. Residues 59–123 constitute a propeptide, removed in mature form; it reads HVIAAEAKTM…KDHLKMSITN (65 aa).

In terms of processing, contains 3 disulfide bonds. Post-translationally, this is a cyclic peptide. As to expression, expressed in flower, stem, shoot, root, leaf, seed, pod and nodule (at protein level).

Probably participates in a plant defense mechanism. Active against Gram-negative bacteria E.coli ATCC 700926 (MIC=1.0 uM), K.pneumoniae ATTC 13883 (MIC=5.5 uM) and P.aeruginosa ATCC 39018 (MIC=7.5 uM). Has hemolytic and cytotoxic activity. The protein is Cliotide T4 of Clitoria ternatea (Butterfly pea).